Consider the following 658-residue polypeptide: ATP-dependent zinc metalloprotease FtsH 4 (658 aa).

The interval 1–22 (MREPTNRQGSPGPGEPRPPAQG) is disordered. The Cytoplasmic segment spans residues 1 to 28 (MREPTNRQGSPGPGEPRPPAQGRPRFPT). A helical membrane pass occupies residues 29–49 (WILWVALLALALWNVYTFFWP). Over 50–149 (SSGARLNIPY…TVKIDQAGGS (100 aa)) the chain is Extracellular. Positions 95-114 (QVLSPGDPVPPGTSPNEIRT) are disordered. Residues 150–170 (VWPSLLATIVPLFLFIGLMVY) traverse the membrane as a helical segment. Residues 171–658 (LGRSMSRGQQ…AAPAAAADSV (488 aa)) are Cytoplasmic-facing. 243–250 (GPPGTGKT) lines the ATP pocket. His-464 lines the Zn(2+) pocket. The active site involves Glu-465. Residues His-468 and Asp-540 each contribute to the Zn(2+) site.

It in the central section; belongs to the AAA ATPase family. In the C-terminal section; belongs to the peptidase M41 family. In terms of assembly, homohexamer. Requires Zn(2+) as cofactor.

It localises to the cell membrane. Its function is as follows. Acts as a processive, ATP-dependent zinc metallopeptidase for both cytoplasmic and membrane proteins. Plays a role in the quality control of integral membrane proteins. The polypeptide is ATP-dependent zinc metalloprotease FtsH 4 (ftsh4) (Sphaerobacter thermophilus (strain ATCC 49802 / DSM 20745 / KCCM 41009 / NCIMB 13125 / S 6022)).